The sequence spans 328 residues: UPF0194 membrane protein YPA_1093 (328 aa).

Positions 1-22 (MNRKKIIVAAVIVALLATLAYG) are cleaved as a signal peptide. Coiled-coil stretches lie at residues 80-109 (YLNA…REEE) and 141-209 (KAVS…ILLA).

This sequence belongs to the UPF0194 family.

It is found in the periplasm. This is UPF0194 membrane protein YPA_1093 from Yersinia pestis bv. Antiqua (strain Antiqua).